Reading from the N-terminus, the 132-residue chain is MAFDGTWKVDRNENYEKFMEKMGINVVKRKLGAHDNLKLTITQEGNKFTVKESSNFRNIDVVFELGVDFAYSLADGTELTGTWTMEGNKLVGKFKRVDNGKELIAVREISGNELIQTYTYEGVEAKRIFKKE.

Residue alanine 2 is modified to N-acetylalanine. Hexadecanoate is bound by residues tryptophan 83 and arginine 107. Tetradecanoate contacts are provided by tryptophan 83 and arginine 107.

It belongs to the calycin superfamily. Fatty-acid binding protein (FABP) family. As to expression, expressed in the small intestine. Expression in the mucosal cells of the ileum extends from the midvillar region to the villus tips.

The protein resides in the cytoplasm. FABPs are thought to play a role in the intracellular transport of long-chain fatty acids and their acyl-CoA esters. FABP2 is probably involved in triglyceride-rich lipoprotein synthesis. Binds saturated long-chain fatty acids with a high affinity, but binds with a lower affinity to unsaturated long-chain fatty acids. FABP2 may also help maintain energy homeostasis by functioning as a lipid sensor. This chain is Fatty acid-binding protein, intestinal (Fabp2), found in Rattus norvegicus (Rat).